We begin with the raw amino-acid sequence, 65 residues long: Movement protein TGBp3 (65 aa).

The Lumenal portion of the chain corresponds to 1–6 (MLPKMQ). Residues 7–26 (PSAQCLIVFSLAFVLGWYVL) traverse the membrane as a helical segment. At 27–65 (RPGNTSCVLLITGESVRLVNCELTKDLVEAVLLRPLKHL) the chain is on the cytoplasmic side.

Belongs to the Tymovirales TGBp3 protein family.

It localises to the host endoplasmic reticulum membrane. Plays a role in viral cell-to-cell propagation, by facilitating genome transport to neighboring plant cells through plasmosdesmata. May induce the formation of granular vesicles derived from the Endoplasmic reticulum, which align on actin filaments. In Potato virus S (strain Peruvian), this protein is Movement protein TGBp3.